Consider the following 263-residue polypeptide: Rano class II histocompatibility antigen, B-1 beta chain (263 aa).

An N-terminal signal peptide occupies residues 1–27; that stretch reads MALQTPSFLLPAAVVVLMVLSSPGTEG. Residues 28-120 form a beta-1 region; sequence RDSPRDFVYQ…SEVRTSLRRL (93 aa). Residues 28 to 224 are Extracellular-facing; the sequence is RDSPRDFVYQ…RAQSESAQSK (197 aa). Intrachain disulfides connect cysteine 42/cysteine 104 and cysteine 143/cysteine 199. N-linked (GlcNAc...) asparagine glycosylation is present at asparagine 46. The segment at 121 to 214 is beta-2; the sequence is EQPNVAISLS…SLESPVTVEW (94 aa). The 89-residue stretch at 123 to 211 folds into the Ig-like C1-type domain; the sequence is PNVAISLSRT…DHPSLESPVT (89 aa). The connecting peptide stretch occupies residues 215 to 224; it reads RAQSESAQSK. A helical membrane pass occupies residues 225–245; the sequence is MLSGIGGFVLGVIFLGLGLFI. Residues 246–263 are Cytoplasmic-facing; sequence RHKRQKGPRGPPPAGLLQ. Lysine 251 is covalently cross-linked (Glycyl lysine isopeptide (Lys-Gly) (interchain with G-Cter in ubiquitin)).

This sequence belongs to the MHC class II family.

It localises to the membrane. Functionally, involved in the presentation of foreign antigens to the immune system. This Rattus norvegicus (Rat) protein is Rano class II histocompatibility antigen, B-1 beta chain (RT1-Bb).